The chain runs to 453 residues: Probable glycine dehydrogenase (decarboxylating) subunit 1 (453 aa).

Belongs to the GcvP family. N-terminal subunit subfamily. In terms of assembly, the glycine cleavage system is composed of four proteins: P, T, L and H. In this organism, the P 'protein' is a heterodimer of two subunits.

It carries out the reaction N(6)-[(R)-lipoyl]-L-lysyl-[glycine-cleavage complex H protein] + glycine + H(+) = N(6)-[(R)-S(8)-aminomethyldihydrolipoyl]-L-lysyl-[glycine-cleavage complex H protein] + CO2. In terms of biological role, the glycine cleavage system catalyzes the degradation of glycine. The P protein binds the alpha-amino group of glycine through its pyridoxal phosphate cofactor; CO(2) is released and the remaining methylamine moiety is then transferred to the lipoamide cofactor of the H protein. This chain is Probable glycine dehydrogenase (decarboxylating) subunit 1, found in Dictyoglomus turgidum (strain DSM 6724 / Z-1310).